A 133-amino-acid chain; its full sequence is Small ribosomal subunit protein uS8 (133 aa).

Residues 1–28 (MANHDPISDMLTRIRNASEKRHEKTKVP) are disordered. The span at 16–26 (NASEKRHEKTK) shows a compositional bias: basic and acidic residues.

Belongs to the universal ribosomal protein uS8 family. In terms of assembly, part of the 30S ribosomal subunit. Contacts proteins S5 and S12.

Functionally, one of the primary rRNA binding proteins, it binds directly to 16S rRNA central domain where it helps coordinate assembly of the platform of the 30S subunit. The sequence is that of Small ribosomal subunit protein uS8 from Prochlorococcus marinus (strain NATL1A).